A 428-amino-acid chain; its full sequence is 3-phosphoshikimate 1-carboxyvinyltransferase (428 aa).

Positions 22, 23, and 27 each coordinate 3-phosphoshikimate. K22 lines the phosphoenolpyruvate pocket. Phosphoenolpyruvate is bound by residues G96 and R124. The 3-phosphoshikimate site is built by S169, S170, Q171, S197, D313, N336, and K340. Residue Q171 coordinates phosphoenolpyruvate. D313 serves as the catalytic Proton acceptor. Phosphoenolpyruvate contacts are provided by R344, R386, and K411.

The protein belongs to the EPSP synthase family. Monomer.

The protein resides in the cytoplasm. It carries out the reaction 3-phosphoshikimate + phosphoenolpyruvate = 5-O-(1-carboxyvinyl)-3-phosphoshikimate + phosphate. Its pathway is metabolic intermediate biosynthesis; chorismate biosynthesis; chorismate from D-erythrose 4-phosphate and phosphoenolpyruvate: step 6/7. Functionally, catalyzes the transfer of the enolpyruvyl moiety of phosphoenolpyruvate (PEP) to the 5-hydroxyl of shikimate-3-phosphate (S3P) to produce enolpyruvyl shikimate-3-phosphate and inorganic phosphate. This Photorhabdus laumondii subsp. laumondii (strain DSM 15139 / CIP 105565 / TT01) (Photorhabdus luminescens subsp. laumondii) protein is 3-phosphoshikimate 1-carboxyvinyltransferase.